A 208-amino-acid polypeptide reads, in one-letter code: Vacuolar iron transporter homolog 5 (208 aa).

The Cytoplasmic segment spans residues 1-41 (MAAMMNNERSSSNKLQVDAENPAAVGDELDLAARANWLRAA). A helical membrane pass occupies residues 42–62 (VLGANDGLVSTASLMLGVGAV). Residues 63–69 (KAEARAM) are Vacuolar-facing. Residues 70–90 (VISGFAGLLAGACSMAIGEFV) traverse the membrane as a helical segment. The Cytoplasmic portion of the chain corresponds to 91–125 (SVCSQRDVELAQLERDGKRGGEEEKALPSPAQAAA). A helical transmembrane segment spans residues 126–146 (ASAMAFSVGAVVPLLAAGFIV). Residues 147-151 (NYRLR) are Vacuolar-facing. A helical membrane pass occupies residues 152–172 (IAVVVAVASVALAAFGCVGAV). Topologically, residues 173-184 (LGRAAVARSSAR) are cytoplasmic. The helical transmembrane segment at 185 to 205 (VVLGGWAAMGITFGLMRLFKA) threads the bilayer. The Vacuolar segment spans residues 206–208 (SGI).

The protein belongs to the CCC1 family.

The protein resides in the vacuole membrane. The catalysed reaction is Fe(2+)(in) = Fe(2+)(out). In terms of biological role, probable vacuolar iron transporter that may be involved in the regulation of iron distribution throughout the plant. The protein is Vacuolar iron transporter homolog 5 of Oryza sativa subsp. japonica (Rice).